The primary structure comprises 127 residues: 3-aminoacrylate deaminase RutC (127 aa).

This sequence belongs to the RutC family.

The enzyme catalyses (Z)-3-aminoacrylate + H2O + H(+) = 3-oxopropanoate + NH4(+). Functionally, involved in pyrimidine catabolism. Catalyzes the deamination of 3-aminoacrylate to malonic semialdehyde, a reaction that can also occur spontaneously. RutC may facilitate the reaction and modulate the metabolic fitness, rather than catalyzing essential functions. The protein is 3-aminoacrylate deaminase RutC of Pseudomonas savastanoi pv. phaseolicola (strain 1448A / Race 6) (Pseudomonas syringae pv. phaseolicola (strain 1448A / Race 6)).